The following is a 583-amino-acid chain: 15-cis-phytoene desaturase, chloroplastic/chromoplastic (583 aa).

A chloroplast and chromoplast-targeting transit peptide spans 1 to 111; that stretch reads MPQIGLVSAV…FRASPRPTKP (111 aa). FAD-binding positions include 118–134, 141–142, lysine 149, 166–167, and tyrosine 172; these read GAGL…ADAG, EA, and HI. Residue arginine 307 participates in substrate binding. 2 residues coordinate FAD: isoleucine 349 and aspartate 538. Position 546 (alanine 546) interacts with substrate. Methionine 548 serves as a coordination point for FAD.

This sequence belongs to the carotenoid/retinoid oxidoreductase family. In terms of assembly, homotetramer. Requires FAD as cofactor.

Its subcellular location is the plastid. It is found in the chloroplast. It localises to the chromoplast. The protein localises to the membrane. The enzyme catalyses 2 a plastoquinone + 15-cis-phytoene = 9,9',15-tri-cis-zeta-carotene + 2 a plastoquinol. The protein operates within carotenoid biosynthesis; lycopene biosynthesis. Functionally, converts phytoene into zeta-carotene via the intermediary of phytofluene by the symmetrical introduction of two double bonds at the C-11 and C-11' positions of phytoene with a concomitant isomerization of two neighboring double bonds at the C9 and C9' positions from trans to cis. The polypeptide is 15-cis-phytoene desaturase, chloroplastic/chromoplastic (PDS) (Solanum lycopersicum (Tomato)).